Reading from the N-terminus, the 70-residue chain is Large ribosomal subunit protein uL29 (70 aa).

The protein belongs to the universal ribosomal protein uL29 family.

In Prochlorococcus marinus (strain MIT 9313), this protein is Large ribosomal subunit protein uL29.